The primary structure comprises 1260 residues: Phosphatidylinositol 3,4,5-trisphosphate 5-phosphatase 2 (1260 aa).

Positions 25-121 constitute an SH2 domain; it reads WYHRDLSRAA…GLVCALLLPV (97 aa). Over residues 126 to 136 the composition is skewed to basic and acidic residues; sequence ELDPPDERDAS. The tract at residues 126–178 is disordered; that stretch reads ELDPPDERDASDGEDEKPPLPPRSGTSVSAPLGPSSPPAAPEPPTPAVESAPN. Ser136 carries the phosphoserine modification. Pro residues predominate over residues 159 to 171; sequence PSSPPAAPEPPTP. Residues Ser243 and Ser355 each carry the phosphoserine modification. At Tyr888 the chain carries Phosphotyrosine. Position 892 is a phosphoserine (Ser892). The segment at 899-1120 is disordered; sequence GAKSKAPSVS…FLGEAAGGDD (222 aa). Positions 940–952 are enriched in pro residues; sequence PPPTGRPPAPPRA. Positions 946–951 match the SH3-binding motif; that stretch reads PPAPPR. A compositionally biased stretch (basic and acidic residues) spans 953–967; it reads APREEPLTPRLKPEG. Phosphothreonine is present on Thr960. The NPXY motif motif lies at 985-988; sequence NPAY. The residue at position 988 (Tyr988) is a Phosphotyrosine. Pro residues-rich tracts occupy residues 998–1013, 1050–1061, and 1090–1108; these read LLPPEPPSPARAPVPP, LPPPDFPPPPLP, and LPPPKAHPRPPLPPGPLPP. Ser1133 bears the Phosphoserine mark. Tyr1164 is subject to Phosphotyrosine. Positions 1181 to 1200 are disordered; the sequence is EDLAEEAPCPQAGRTGGLGE. An SAM domain is found at 1198–1260; the sequence is LGEAGMGAWL…LLLDTLQLSK (63 aa). Phosphoserine is present on Ser1259.

This sequence belongs to the inositol 1,4,5-trisphosphate 5-phosphatase family. As to quaternary structure, interacts with tyrosine phosphorylated form of SHC1. Interacts with EGFR. Upon stimulation by the EGF signaling pathway, it forms a complex with SHC1 and EGFR. Interacts with cytoskeletal protein SORBS3/vinexin, promoting its localization to the periphery of cells. Forms a complex with filamin (FLNA or FLNB), actin, GPIb (GP1BA or GP1BB) that regulates cortical and submembraneous actin. Interacts with c-Met/MET, when c-Met/MET is phosphorylated on 'Tyr-1356'. Interacts with p130Cas/BCAR1. Interacts with CENTD3/ARAP3 via its SAM domain. Interacts with c-Cbl/CBL and CAP/SORBS1. Interacts with activated EPHA2 receptor. Interacts with receptor FCGR2A. Interacts with receptor FCGR2B. Interacts with tyrosine kinase ABL1. Interacts with tyrosine kinase TEC. Interacts with CSF1R. Interacts (via N-terminus) with SH3YL1 (via SH3 domain). Interacts with FCRL6 (tyrosine phosphorylated form). Interacts (via SH2 domain) with tyrosine phosphorylated KLRC1 (via ITIM). Interacts with NEDD9/HEF1. In terms of processing, tyrosine phosphorylated by the members of the SRC family after exposure to a diverse array of extracellular stimuli such as insulin, growth factors such as EGF or PDGF, chemokines, integrin ligands and hypertonic and oxidative stress. May be phosphorylated upon IgG receptor FCGR2B-binding. Phosphorylated at Tyr-988 following cell attachment and spreading. Phosphorylated at Tyr-1164 following EGF signaling pathway stimulation. In terms of tissue distribution, expressed abundantly in skeletal muscle tissue.

Its subcellular location is the cytoplasm. It localises to the cytosol. It is found in the cytoskeleton. The protein localises to the membrane. The protein resides in the cell projection. Its subcellular location is the filopodium. It localises to the lamellipodium. It is found in the basal cell membrane. The protein localises to the nucleus. The protein resides in the nucleus speckle. Its subcellular location is the spindle pole. The catalysed reaction is a 1,2-diacyl-sn-glycero-3-phospho-(1D-myo-inositol-3,4,5-trisphosphate) + H2O = a 1,2-diacyl-sn-glycero-3-phospho-(1D-myo-inositol-3,4-bisphosphate) + phosphate. It carries out the reaction 1,2-dioctanoyl-sn-glycero-3-phospho-(1D-myo-inositol-3,4,5-trisphosphate) + H2O = 1,2-dioctanoyl-sn-glycero-3-phospho-(1D-myo-inositol-3,4-bisphosphate) + phosphate. The enzyme catalyses 1,2-dihexadecanoyl-sn-glycero-3-phospho-(1D-myo-inositol-3,4,5-trisphosphate) + H2O = 1,2-dihexadecanoyl-sn-glycero-3-phospho-(1D-myo-inositol-3,4-bisphosphate) + phosphate. Activated upon translocation to the sites of synthesis of PtdIns(3,4,5)P3 in the membrane. Enzymatic activity is enhanced in the presence of phosphatidylserine. In terms of biological role, phosphatidylinositol (PtdIns) phosphatase that specifically hydrolyzes the 5-phosphate of phosphatidylinositol-3,4,5-trisphosphate (PtdIns(3,4,5)P3) to produce PtdIns(3,4)P2, thereby negatively regulating the PI3K (phosphoinositide 3-kinase) pathways. Required for correct mitotic spindle orientation and therefore progression of mitosis. Plays a central role in regulation of PI3K-dependent insulin signaling, although the precise molecular mechanisms and signaling pathways remain unclear. While overexpression reduces both insulin-stimulated MAP kinase and Akt activation, its absence does not affect insulin signaling or GLUT4 trafficking. Confers resistance to dietary obesity. May act by regulating AKT2, but not AKT1, phosphorylation at the plasma membrane. Part of a signaling pathway that regulates actin cytoskeleton remodeling. Required for the maintenance and dynamic remodeling of actin structures as well as in endocytosis, having a major impact on ligand-induced EGFR internalization and degradation. Participates in regulation of cortical and submembraneous actin by hydrolyzing PtdIns(3,4,5)P3 thereby regulating membrane ruffling. Regulates cell adhesion and cell spreading. Required for HGF-mediated lamellipodium formation, cell scattering and spreading. Acts as a negative regulator of EPHA2 receptor endocytosis by inhibiting via PI3K-dependent Rac1 activation. Acts as a regulator of neuritogenesis by regulating PtdIns(3,4,5)P3 level and is required to form an initial protrusive pattern, and later, maintain proper neurite outgrowth. Acts as a negative regulator of the FC-gamma-RIIA receptor (FCGR2A). Mediates signaling from the FC-gamma-RIIB receptor (FCGR2B), playing a central role in terminating signal transduction from activating immune/hematopoietic cell receptor systems. Involved in EGF signaling pathway. Upon stimulation by EGF, it is recruited by EGFR and dephosphorylates PtdIns(3,4,5)P3. Plays a negative role in regulating the PI3K-PKB pathway, possibly by inhibiting PKB activity. Down-regulates Fc-gamma-R-mediated phagocytosis in macrophages independently of INPP5D/SHIP1. In macrophages, down-regulates NF-kappa-B-dependent gene transcription by regulating macrophage colony-stimulating factor (M-CSF)-induced signaling. Plays a role in the localization of AURKA and NEDD9/HEF1 to the basolateral membrane at interphase in polarized cysts, thereby mediates cell cycle homeostasis, cell polarization and cilia assembly. Additionally promotion of cilia growth is also facilitated by hydrolysis of (PtdIns(3,4,5)P3) to PtdIns(3,4)P2. Promotes formation of apical membrane-initiation sites during the initial stages of lumen formation via Rho family-induced actin filament organization and CTNNB1 localization to cell-cell contacts. May also hydrolyze PtdIns(1,3,4,5)P4, and could thus affect the levels of the higher inositol polyphosphates like InsP6. Involved in endochondral ossification. In Sus scrofa (Pig), this protein is Phosphatidylinositol 3,4,5-trisphosphate 5-phosphatase 2.